Consider the following 559-residue polypeptide: Formate--tetrahydrofolate ligase (559 aa).

68–75 (TPAGEGKS) lines the ATP pocket.

Belongs to the formate--tetrahydrofolate ligase family.

It catalyses the reaction (6S)-5,6,7,8-tetrahydrofolate + formate + ATP = (6R)-10-formyltetrahydrofolate + ADP + phosphate. The protein operates within one-carbon metabolism; tetrahydrofolate interconversion. The polypeptide is Formate--tetrahydrofolate ligase (Bacillus licheniformis (strain ATCC 14580 / DSM 13 / JCM 2505 / CCUG 7422 / NBRC 12200 / NCIMB 9375 / NCTC 10341 / NRRL NRS-1264 / Gibson 46)).